The following is a 312-amino-acid chain: Ribosomal protein uL3 glutamine methyltransferase (312 aa).

This sequence belongs to the protein N5-glutamine methyltransferase family. PrmB subfamily.

The enzyme catalyses L-glutaminyl-[ribosomal protein uL3] + S-adenosyl-L-methionine = N(5)-methyl-L-glutaminyl-[ribosomal protein uL3] + S-adenosyl-L-homocysteine + H(+). Its function is as follows. Methylates large ribosomal subunit protein uL3 on a specific glutamine residue. This is Ribosomal protein uL3 glutamine methyltransferase from Xylella fastidiosa (strain 9a5c).